Consider the following 1016-residue polypeptide: Probable outer membrane protein PmpH (1016 aa).

A signal peptide spans 1 to 24 (MPFSLRSTSFCFLACLCSYSYGFA). The Autotransporter domain maps to 697–1016 (GELVPNSLWV…FVSMGLNRIF (320 aa)).

The protein belongs to the PMP outer membrane protein family.

It localises to the secreted. Its subcellular location is the cell wall. The protein resides in the cell outer membrane. This is Probable outer membrane protein PmpH (pmpH) from Chlamydia trachomatis serovar D (strain ATCC VR-885 / DSM 19411 / UW-3/Cx).